A 475-amino-acid chain; its full sequence is AAA-ATPase At1g43910 (475 aa).

A helical membrane pass occupies residues 11–28; sequence VSAVFSLYTSFSAITMLF. A Phosphothreonine modification is found at Thr85. 246 to 253 lines the ATP pocket; the sequence is GPPGTGKS. Disordered regions lie at residues 306-328 and 453-475; these read SRRRQSKKKEEDGGEDDGEPQKR and KGEDSSVEEEGEIEDAETKEAET. Residues 457-467 are compositionally biased toward acidic residues; sequence SSVEEEGEIED.

It belongs to the AAA ATPase family. BCS1 subfamily. Mg(2+) is required as a cofactor. Expressed in developing shoots.

It is found in the membrane. It carries out the reaction ATP + H2O = ADP + phosphate + H(+). The sequence is that of AAA-ATPase At1g43910 from Arabidopsis thaliana (Mouse-ear cress).